We begin with the raw amino-acid sequence, 475 residues long: Tesmin (475 aa).

A phosphoserine mark is found at Ser-34 and Ser-67. The region spanning 263–372 (SGPALQGPPK…KCIACKNYEE (110 aa)) is the CRC domain.

It belongs to the lin-54 family.

The protein resides in the cytoplasm. The protein localises to the nucleus. Its function is as follows. May have a role in spermatogenesis. This chain is Tesmin, found in Rattus norvegicus (Rat).